A 288-amino-acid chain; its full sequence is Ribosomal RNA small subunit methyltransferase I (288 aa).

Belongs to the methyltransferase superfamily. RsmI family.

The protein resides in the cytoplasm. It catalyses the reaction cytidine(1402) in 16S rRNA + S-adenosyl-L-methionine = 2'-O-methylcytidine(1402) in 16S rRNA + S-adenosyl-L-homocysteine + H(+). Catalyzes the 2'-O-methylation of the ribose of cytidine 1402 (C1402) in 16S rRNA. In Vibrio cholerae serotype O1 (strain ATCC 39315 / El Tor Inaba N16961), this protein is Ribosomal RNA small subunit methyltransferase I.